The following is a 232-amino-acid chain: Ribonuclease 3 (232 aa).

Residues 5 to 134 (QTVLKNHFAI…FLGALLLDKD (130 aa)) enclose the RNase III domain. Mg(2+) is bound at residue E47. D51 is an active-site residue. 2 residues coordinate Mg(2+): D120 and E123. E123 is a catalytic residue. A DRBM domain is found at 160–229 (DYKTHLQELL…AKNAVEKGLD (70 aa)).

Belongs to the ribonuclease III family. Homodimer. Mg(2+) is required as a cofactor.

It localises to the cytoplasm. The enzyme catalyses Endonucleolytic cleavage to 5'-phosphomonoester.. Its function is as follows. Digests double-stranded RNA. Involved in the processing of primary rRNA transcript to yield the immediate precursors to the large and small rRNAs (23S and 16S). Processes some mRNAs, and tRNAs when they are encoded in the rRNA operon. Processes pre-crRNA and tracrRNA of type II CRISPR loci if present in the organism. The chain is Ribonuclease 3 from Streptococcus pneumoniae (strain P1031).